The sequence spans 167 residues: Putative NADH-quinone oxidoreductase subunit B 2 (167 aa).

This sequence belongs to the complex I 20 kDa subunit family. As to quaternary structure, NDH-1 is composed of 14 different subunits. Subunits NuoB, C, D, E, F, and G constitute the peripheral sector of the complex.

Its subcellular location is the cell inner membrane. It catalyses the reaction a quinone + NADH + 5 H(+)(in) = a quinol + NAD(+) + 4 H(+)(out). Functionally, NDH-1 shuttles electrons from NADH, via FMN and iron-sulfur (Fe-S) centers, to quinones in the respiratory chain. Couples the redox reaction to proton translocation (for every two electrons transferred, four hydrogen ions are translocated across the cytoplasmic membrane), and thus conserves the redox energy in a proton gradient. The sequence is that of Putative NADH-quinone oxidoreductase subunit B 2 from Burkholderia pseudomallei (strain 1710b).